Here is a 70-residue protein sequence, read N- to C-terminus: Frenatin 4.1 (70 aa).

Positions 1 to 22 (MAFLKKSLFLVLFLGLVNLSIC) are cleaved as a signal peptide. A propeptide spanning residues 23-46 (EEEKREEENKEEEDENEALSEVKR) is cleaved from the precursor. K68 is modified (lysine amide).

It belongs to the frog skin active peptide (FSAP) family. Frenatin subfamily. As to expression, expressed by the skin glands.

It is found in the secreted. Its subcellular location is the target cell membrane. In terms of biological role, peptide with unknown function. Does not show antimicrobial activity against S.aureus (MIC&gt;512 ug/mL), E.coli (MIC&gt;512 ug/mL) and C.albicans (MIC&gt;512 ug/mL). Does not show hemolytic activity. Antimicrobial peptide with activity against E.coli (MIC=128 ug/mL or 54 uM) and C.albicans (MIC=256 ug/mL or 108 uM). Does not show activity against S.aureus (MIC&gt;512 ug/mL). Does not show hemolytic activity. The chain is Frenatin 4.1 from Nyctimystes infrafrenatus (White-lipped tree frog).